The primary structure comprises 157 residues: Mini-ribonuclease 3 (157 aa).

The active site involves aspartate 18. The interval 126 to 157 (EEDEGKGKGETAKEEESITDALSPAEQSEIDC) is disordered. A compositionally biased stretch (basic and acidic residues) spans 130–141 (GKGKGETAKEEE).

Belongs to the MrnC RNase family. As to quaternary structure, homodimer. Mg(2+) serves as cofactor.

Its subcellular location is the cytoplasm. Its function is as follows. Involved in correct processing of both the 5' and 3' ends of 23S rRNA precursor. Processes 30S rRNA precursor transcript even in absence of ribonuclease 3 (Rnc); Rnc processes 30S rRNA into smaller rRNA precursors. In Desulfitobacterium hafniense (strain Y51), this protein is Mini-ribonuclease 3.